A 68-amino-acid polypeptide reads, in one-letter code: Large ribosomal subunit protein uL29 (68 aa).

The protein belongs to the universal ribosomal protein uL29 family.

This chain is Large ribosomal subunit protein uL29, found in Streptococcus suis (strain 98HAH33).